The chain runs to 3165 residues: Protein eyes shut homolog (3165 aa).

An N-terminal signal peptide occupies residues 1–21 (MTDKSIVILSLMVFHSSFING). An N-linked (GlcNAc...) asparagine glycan is attached at Asn166. EGF-like domains lie at 170–212 (KQQF…KYCQ), 213–254 (ELDA…KNCS), and 256–292 (IIGQ…PFCE). Disulfide bonds link Cys174–Cys189, Cys183–Cys200, Cys202–Cys211, Cys217–Cys228, Cys222–Cys242, Cys244–Cys253, Cys260–Cys270, Cys265–Cys280, and Cys282–Cys291. N-linked (GlcNAc...) asparagine glycans are attached at residues Asn269 and Asn272. Residues Asn311 and Asn343 are each glycosylated (N-linked (GlcNAc...) asparagine). EGF-like domains follow at residues 332–368 (DVSE…LLCK) and 370–406 (IQTS…KNCE). Intrachain disulfides connect Cys341-Cys356, Cys358-Cys367, Cys374-Cys385, and Cys396-Cys405. N-linked (GlcNAc...) asparagine glycans are attached at residues Asn506 and Asn566. EGF-like domains lie at 567–602 (TTDD…RLCV) and 643–679 (DTED…TQCE). 46 cysteine pairs are disulfide-bonded: Cys575-Cys590, Cys592-Cys601, Cys669-Cys678, Cys685-Cys696, Cys690-Cys705, Cys707-Cys719, Cys737-Cys748, Cys742-Cys757, Cys759-Cys768, Cys775-Cys786, Cys780-Cys795, Cys797-Cys806, Cys813-Cys824, Cys818-Cys835, Cys837-Cys846, Cys853-Cys866, Cys860-Cys876, Cys878-Cys887, Cys894-Cys905, Cys899-Cys914, Cys916-Cys925, Cys932-Cys943, Cys937-Cys952, Cys954-Cys963, Cys970-Cys981, Cys975-Cys990, Cys992-Cys1001, Cys1008-Cys1019, Cys1013-Cys1028, Cys1030-Cys1039, Cys1046-Cys1056, Cys1051-Cys1065, Cys1067-Cys1076, Cys1083-Cys1094, Cys1088-Cys1103, Cys1105-Cys1114, Cys1121-Cys1137, Cys1131-Cys1147, Cys1149-Cys1158, Cys1165-Cys1176, Cys1170-Cys1185, Cys1187-Cys1196, Cys2037-Cys2063, Cys2103-Cys2114, Cys2108-Cys2128, and Cys2130-Cys2139. The 40-residue stretch at 681–720 (DIDECASHPCKNGATCIDQPGNYFCQCVPPFKVVDGFSCL) folds into the EGF-like 8; calcium-binding domain. The region spanning 733 to 769 (DIDDCILNACEHNSTCKDLHLSYQCVCLSDWEGNFCE) is the EGF-like 9; calcium-binding domain. Positions 771 to 807 (ESNECKMNPCKNNSTCTDLYKSYRCECTSGWTGQNCS) constitute an EGF-like 10; calcium-binding domain. EGF-like domains are found at residues 809–847 (EINE…QFCH), 849–888 (RYNL…KNCE), and 890–926 (DVKD…SLCE). In terms of domain architecture, EGF-like 14; calcium-binding spans 928 to 964 (EINECSSEPCKNNGTCVDLTNRFFCNCEPEYHGPFCE). Residues 966-1002 (DVNKCKISPCLDEENCVYRTDGYNCLCAPGYTGINCE) form the EGF-like 15 domain. The 37-residue stretch at 1004 to 1040 (NLDECLSEPCLHDGVCIDGINHYTCDCKSGFFGTHCE) folds into the EGF-like 16; calcium-binding domain. EGF-like domains lie at 1042–1077 (NAND…TQCK), 1079–1115 (KIND…AYCE), and 1117–1159 (SIDN…QFCE). In terms of domain architecture, EGF-like 20; calcium-binding spans 1161–1197 (NINECSSSPCLHGADCEDHINGYVCKCQPGWSGHHCE). The Laminin G-like 1 domain maps to 1883–2063 (FSCVRYYGDS…AVKNYHINNC (181 aa)). The EGF-like 21 domain occupies 2099–2140 (APSVCQQDVCHNGGTCHAIFLSSGIVSFQCDCPLHFTGRFCE). The region spanning 2145-2339 (LFFPSFNGNS…NIENCHVPWC (195 aa)) is the Laminin G-like 2 domain. An N-linked (GlcNAc...) asparagine glycan is attached at Asn2170. EGF-like domains follow at residues 2335–2368 (HVPW…YSGK) and 2371–2408 (QFAS…PLCT). 19 disulfide bridges follow: Cys2339/Cys2350, Cys2344/Cys2359, Cys2375/Cys2386, Cys2380/Cys2396, Cys2398/Cys2407, Cys2576/Cys2609, Cys2614/Cys2625, Cys2619/Cys2634, Cys2636/Cys2645, Cys2652/Cys2668, Cys2662/Cys2677, Cys2679/Cys2688, Cys2868/Cys2895, Cys2900/Cys2911, Cys2905/Cys2920, Cys2922/Cys2931, Cys2937/Cys2948, Cys2942/Cys2958, and Cys2960/Cys2969. Positions 2419 to 2609 (SGTDAFGYTS…PNAGRSVGQC (191 aa)) constitute a Laminin G-like 3 domain. EGF-like domains follow at residues 2610-2646 (HASP…SFCT) and 2648-2689 (TVST…IYCE). In terms of domain architecture, Laminin G-like 4 spans 2717 to 2895 (DPSFRSNELS…AKGGSNVGDC (179 aa)). EGF-like domains lie at 2896–2932 (DGTA…NTCN) and 2933–2970 (QSVS…RYCE). Positions 2975 to 3165 (FSTAKFMGNS…YDGDEQNEVT (191 aa)) constitute a Laminin G-like 5 domain.

Belongs to the EYS family. In terms of tissue distribution, expressed in retina (at protein level). Isoform 1: Detected in retina. Isoform 2: Detected in retina. Isoform 3: Strongly expressed in retina and testis. Isoform 4: Strongly expressed in testis, and weakly expressed in retina.

The protein localises to the cell projection. It is found in the cilium. The protein resides in the photoreceptor outer segment. Its subcellular location is the cytoplasm. It localises to the cytoskeleton. The protein localises to the cilium axoneme. It is found in the microtubule organizing center. The protein resides in the centrosome. Its subcellular location is the secreted. It localises to the extracellular space. The protein localises to the extracellular matrix. It is found in the interphotoreceptor matrix. Its function is as follows. Required to maintain the integrity of photoreceptor cells. Specifically required for normal morphology of the photoreceptor ciliary pocket, and might thus facilitate protein trafficking between the photoreceptor inner and outer segments via the transition zone. The polypeptide is Protein eyes shut homolog (EYS) (Homo sapiens (Human)).